The chain runs to 1368 residues: DNA-directed RNA polymerase subunit beta (1368 aa).

This sequence belongs to the RNA polymerase beta chain family. In terms of assembly, the RNAP catalytic core consists of 2 alpha, 1 beta, 1 beta' and 1 omega subunit. When a sigma factor is associated with the core the holoenzyme is formed, which can initiate transcription.

It catalyses the reaction RNA(n) + a ribonucleoside 5'-triphosphate = RNA(n+1) + diphosphate. Functionally, DNA-dependent RNA polymerase catalyzes the transcription of DNA into RNA using the four ribonucleoside triphosphates as substrates. The protein is DNA-directed RNA polymerase subunit beta of Burkholderia lata (strain ATCC 17760 / DSM 23089 / LMG 22485 / NCIMB 9086 / R18194 / 383).